Reading from the N-terminus, the 229-residue chain is GTP cyclohydrolase 1 (229 aa).

The tract at residues 1-21 (MTLAKPGSGSQSRMDDKAHFK) is disordered. Zn(2+) contacts are provided by Cys116, His119, and Cys187.

This sequence belongs to the GTP cyclohydrolase I family. In terms of assembly, toroid-shaped homodecamer, composed of two pentamers of five dimers.

The enzyme catalyses GTP + H2O = 7,8-dihydroneopterin 3'-triphosphate + formate + H(+). Its pathway is cofactor biosynthesis; 7,8-dihydroneopterin triphosphate biosynthesis; 7,8-dihydroneopterin triphosphate from GTP: step 1/1. The chain is GTP cyclohydrolase 1 from Synechococcus sp. (strain JA-2-3B'a(2-13)) (Cyanobacteria bacterium Yellowstone B-Prime).